We begin with the raw amino-acid sequence, 1408 residues long: DNA-directed RNA polymerase subunit beta' (1408 aa).

Zn(2+) is bound by residues cysteine 70, cysteine 72, cysteine 85, and cysteine 88. Aspartate 460, aspartate 462, and aspartate 464 together coordinate Mg(2+). 4 residues coordinate Zn(2+): cysteine 814, cysteine 888, cysteine 895, and cysteine 898.

The protein belongs to the RNA polymerase beta' chain family. The RNAP catalytic core consists of 2 alpha, 1 beta, 1 beta' and 1 omega subunit. When a sigma factor is associated with the core the holoenzyme is formed, which can initiate transcription. It depends on Mg(2+) as a cofactor. Zn(2+) serves as cofactor.

It carries out the reaction RNA(n) + a ribonucleoside 5'-triphosphate = RNA(n+1) + diphosphate. Its function is as follows. DNA-dependent RNA polymerase catalyzes the transcription of DNA into RNA using the four ribonucleoside triphosphates as substrates. The sequence is that of DNA-directed RNA polymerase subunit beta' from Serratia proteamaculans (strain 568).